The chain runs to 238 residues: Tetraspanin-8 (238 aa).

The Cytoplasmic portion of the chain corresponds to 1–9 (MAGVNVCIK). Residues 10 to 33 (CSMFIFNFVFWLCGAIILSVAISI) traverse the membrane as a helical segment. The Extracellular portion of the chain corresponds to 34-57 (RAGKIGQEILAPGDADLNLFIAVN). The chain crosses the membrane as a helical span at residues 58-72 (ILIFVGAVIMILGFL). Residues 73-83 (GCCGAMKENQF) are Cytoplasmic-facing. The helical transmembrane segment at 84–109 (MMILFFVGLLMILLLQVAAGIVATTR) threads the bilayer. Topologically, residues 110 to 206 (KSKTEQALNK…ASISQMFSKR (97 aa)) are extracellular. A glycan (N-linked (GlcNAc...) asparagine) is linked at Asn118. The helical transmembrane segment at 207 to 231 (LFIVLALAFGLAAIEVLGLIFSIVL) threads the bilayer. Over 232–238 (YCQMRKK) the chain is Cytoplasmic.

The protein belongs to the tetraspanin (TM4SF) family. As to quaternary structure, forms homooligomers. Interacts with MEP1B. Interacts with integrin alpha3/ITGA3. Interacts with RICTOR and MTOR. Interacts with ADAM17. Interacts with ECE1.

The protein localises to the cell membrane. Its function is as follows. Structural component of specialized membrane microdomains known as tetraspanin-enriched microdomains (TERMs), which act as platforms for receptor clustering and signaling. Participates thereby in diverse biological functions such as cell signal transduction, migration and protein trafficking. Promotes ADAM17-mediated TNF-alpha processing through recruitment of ADAM17 to tetraspanin-enriched micro-domains (TEMs). Forms a complex with RICTOR and integrin alpha3/ITGA3 to mediate mTORC2 activation and AKT1 phosphorylation leading to cell migration. Reduces apoptosis and autophagy induced by high glucose levels through forming a complex with mTOR and RICTOR. Contributes to the maintenance of intestinal epithelial barrier and plays a role in the regulation of intestine inflammation by switching interferon gamma receptor 1/IFNGR1 from clathrin-dependent to lipid raft-dependent endocytosis route to limit STAT1 activation magnitude and duration. Acts as a modulator of the endothelin axis by associating with endothelin converting enzyme ECE1 and regulating its activity of conversion of the endothelin-1 precursor to endothelin. In Bos taurus (Bovine), this protein is Tetraspanin-8 (TSPAN8).